Here is a 514-residue protein sequence, read N- to C-terminus: Multifunctional alkaline phosphatase superfamily protein PehA (514 aa).

Residues Asp12, Cys57, Asp324, and His325 each coordinate Mn(2+). Residue Cys57 is the Nucleophile of the active site. Cys57 bears the 3-oxoalanine (Cys) mark.

It belongs to the alkaline phosphatase superfamily. In terms of assembly, homotetramer. Mn(2+) is required as a cofactor. Post-translationally, the conversion to 3-oxoalanine (also known as C-formylglycine, FGly), of a serine or cysteine residue in prokaryotes and of a cysteine residue in eukaryotes, is critical for catalytic activity. Phosphate triester hydrolytic activity is retained with unmodified cysteine acting as a nucleophile.

Anions including Cl(-) and CH3COO(-), and SO4(2-) salts stimulate activity 20-40% at 100 mM. In terms of biological role, hydrolytic enzyme with a broad substrate specificity acting on phosphate diesters and phosphonate monoesters. Hydrolyzes phosphate mono- and triesters, sulfate monoesters and sulfonate monoesters. Hydrolyzes glyphosate monoesters. Does not hydrolyze DNA or cGMP. Hydrolyzes glyceryl glyphosate, but this substrate has a much lower affinity than the glyphosate monoesters. The polypeptide is Multifunctional alkaline phosphatase superfamily protein PehA (Trinickia caryophylli (Paraburkholderia caryophylli)).